We begin with the raw amino-acid sequence, 157 residues long: Cyclic pyranopterin monophosphate synthase (157 aa).

Substrate is bound by residues 74-76 (MCH) and 112-113 (ME). The active site involves Asp127.

Belongs to the MoaC family. As to quaternary structure, homohexamer; trimer of dimers.

The catalysed reaction is (8S)-3',8-cyclo-7,8-dihydroguanosine 5'-triphosphate = cyclic pyranopterin phosphate + diphosphate. The protein operates within cofactor biosynthesis; molybdopterin biosynthesis. Catalyzes the conversion of (8S)-3',8-cyclo-7,8-dihydroguanosine 5'-triphosphate to cyclic pyranopterin monophosphate (cPMP). The sequence is that of Cyclic pyranopterin monophosphate synthase from Campylobacter jejuni subsp. jejuni serotype O:23/36 (strain 81-176).